Here is a 376-residue protein sequence, read N- to C-terminus: Queuine tRNA-ribosyltransferase (376 aa).

Catalysis depends on Asp92, which acts as the Proton acceptor. Substrate is bound by residues 92 to 96 (DSGGF), Asp146, Gln190, and Gly217. Residues 248-254 (GVGRPED) form an RNA binding region. The active-site Nucleophile is the Asp267. An RNA binding; important for wobble base 34 recognition region spans residues 272–276 (TRNAR). 4 residues coordinate Zn(2+): Cys305, Cys307, Cys310, and His337.

The protein belongs to the queuine tRNA-ribosyltransferase family. Homodimer. Within each dimer, one monomer is responsible for RNA recognition and catalysis, while the other monomer binds to the replacement base PreQ1. It depends on Zn(2+) as a cofactor.

The catalysed reaction is 7-aminomethyl-7-carbaguanine + guanosine(34) in tRNA = 7-aminomethyl-7-carbaguanosine(34) in tRNA + guanine. It participates in tRNA modification; tRNA-queuosine biosynthesis. In terms of biological role, catalyzes the base-exchange of a guanine (G) residue with the queuine precursor 7-aminomethyl-7-deazaguanine (PreQ1) at position 34 (anticodon wobble position) in tRNAs with GU(N) anticodons (tRNA-Asp, -Asn, -His and -Tyr). Catalysis occurs through a double-displacement mechanism. The nucleophile active site attacks the C1' of nucleotide 34 to detach the guanine base from the RNA, forming a covalent enzyme-RNA intermediate. The proton acceptor active site deprotonates the incoming PreQ1, allowing a nucleophilic attack on the C1' of the ribose to form the product. After dissociation, two additional enzymatic reactions on the tRNA convert PreQ1 to queuine (Q), resulting in the hypermodified nucleoside queuosine (7-(((4,5-cis-dihydroxy-2-cyclopenten-1-yl)amino)methyl)-7-deazaguanosine). This Stenotrophomonas maltophilia (strain R551-3) protein is Queuine tRNA-ribosyltransferase.